The following is a 226-amino-acid chain: Ribonuclease 3 (226 aa).

In terms of domain architecture, RNase III spans 7–129; the sequence is LPRLCRTLGY…IIGAVYLDAD (123 aa). A Mg(2+)-binding site is contributed by Glu-42. The active site involves Asp-46. 2 residues coordinate Mg(2+): Asp-115 and Glu-118. The active site involves Glu-118. The 71-residue stretch at 156–226 folds into the DRBM domain; that stretch reads DPKTILQEYL…AAQVLELLNK (71 aa).

It belongs to the ribonuclease III family. As to quaternary structure, homodimer. The cofactor is Mg(2+).

Its subcellular location is the cytoplasm. It carries out the reaction Endonucleolytic cleavage to 5'-phosphomonoester.. Functionally, digests double-stranded RNA. Involved in the processing of primary rRNA transcript to yield the immediate precursors to the large and small rRNAs (23S and 16S). Processes some mRNAs, and tRNAs when they are encoded in the rRNA operon. Processes pre-crRNA and tracrRNA of type II CRISPR loci if present in the organism. In Shewanella frigidimarina (strain NCIMB 400), this protein is Ribonuclease 3.